The chain runs to 351 residues: Gene 58 protein (351 aa).

Helical transmembrane passes span 14–34 (FSTG…ATVF), 43–63 (QSVL…FCAV), 70–90 (LGLL…SWSL), 97–117 (LVPG…IVCF), 133–153 (LGFL…IYLT), 155–175 (VMFA…SHVW), 214–234 (LICL…LVMF), 240–260 (GVST…SLII), 268–288 (AVYS…GYLF), 293–313 (LSML…CLLY), and 328–348 (FILN…LLAQ).

It belongs to the herpesviridae BMRF2 family.

It is found in the host membrane. This chain is Gene 58 protein (58), found in Connochaetes taurinus (Blue wildebeest).